Here is a 353-residue protein sequence, read N- to C-terminus: Inositol 3-kinase (353 aa).

ATP-binding positions include S197, G247–D250, and N274. The Proton acceptor role is filled by D250.

Belongs to the carbohydrate kinase pfkB family.

It carries out the reaction myo-inositol + ATP = 1D-myo-inositol 3-phosphate + ADP + H(+). Functionally, kinase that phosphorylates myo-inositol to produce multiple myo-inositol monophosphates. Participates in phytic acid biosynthesis in developing seeds. Phytic acid is the primary storage form of phosphorus in cereal grains and other plant seeds. This is Inositol 3-kinase from Arabidopsis thaliana (Mouse-ear cress).